A 396-amino-acid chain; its full sequence is Serpin-ZXA (396 aa).

Positions 343–367 (GTEAAAATAAVITLRSAPIAEDFVA) are RCL.

Belongs to the serpin family.

In terms of biological role, probable serine protease inhibitor. This Oryza sativa subsp. japonica (Rice) protein is Serpin-ZXA.